The sequence spans 77 residues: RNA-binding protein Hfq (77 aa).

In terms of domain architecture, Sm spans 9-69; that stretch reads DQFLNQLRKE…ISTFAPQKNV (61 aa).

Belongs to the Hfq family. In terms of assembly, homohexamer.

In terms of biological role, RNA chaperone that binds small regulatory RNA (sRNAs) and mRNAs to facilitate mRNA translational regulation in response to envelope stress, environmental stress and changes in metabolite concentrations. Also binds with high specificity to tRNAs. The chain is RNA-binding protein Hfq from Shouchella clausii (strain KSM-K16) (Alkalihalobacillus clausii).